The sequence spans 884 residues: Translation initiation factor IF-2 (884 aa).

The interval 93–288 (VNTPEAEQAK…KGKRKPSTLQ (196 aa)) is disordered. Residues 99 to 209 (EQAKAEEQAQ…KMAAENEGKW (111 aa)) show a composition bias toward basic and acidic residues. The span at 216–229 (QTESADYHVTTSQH) shows a compositional bias: polar residues. The span at 231–246 (RAAEDENDAKVEGDRR) shows a compositional bias: basic and acidic residues. Positions 247–261 (SRTRGGKATKQKKGN) are enriched in basic residues. The span at 262-275 (KLSESKADREEARA) shows a compositional bias: basic and acidic residues. The tr-type G domain maps to 383-552 (HRAPVVTIMG…LLQAEVLELK (170 aa)). Residues 392–399 (GHVDHGKT) form a G1 region. 392–399 (GHVDHGKT) contacts GTP. The G2 stretch occupies residues 417–421 (GITQH). The G3 stretch occupies residues 438-441 (DTPG). GTP contacts are provided by residues 438 to 442 (DTPGH) and 492 to 495 (NKID). Positions 492–495 (NKID) are G4. A G5 region spans residues 528–530 (SAK).

The protein belongs to the TRAFAC class translation factor GTPase superfamily. Classic translation factor GTPase family. IF-2 subfamily.

It localises to the cytoplasm. One of the essential components for the initiation of protein synthesis. Protects formylmethionyl-tRNA from spontaneous hydrolysis and promotes its binding to the 30S ribosomal subunits. Also involved in the hydrolysis of GTP during the formation of the 70S ribosomal complex. The sequence is that of Translation initiation factor IF-2 from Yersinia pestis bv. Antiqua (strain Antiqua).